Here is a 672-residue protein sequence, read N- to C-terminus: UvrABC system protein B (672 aa).

A Helicase ATP-binding domain is found at 26–181 (AGLEDGLAYQ…ILQRLAELQY (156 aa)). 39 to 46 (GVTGSGKT) contacts ATP. The Beta-hairpin signature appears at 92–115 (YYDYYQPEAYVPSSDTYIEKDASI). Positions 430 to 592 (QVDDLLSEIK…ITPKSIQKAV (163 aa)) constitute a Helicase C-terminal domain. The UVR domain occupies 631 to 666 (AKELRKLEEQMYHHARNLEFEEAAAVRDKIQHIRKG).

It belongs to the UvrB family. As to quaternary structure, forms a heterotetramer with UvrA during the search for lesions. Interacts with UvrC in an incision complex.

It localises to the cytoplasm. The UvrABC repair system catalyzes the recognition and processing of DNA lesions. A damage recognition complex composed of 2 UvrA and 2 UvrB subunits scans DNA for abnormalities. Upon binding of the UvrA(2)B(2) complex to a putative damaged site, the DNA wraps around one UvrB monomer. DNA wrap is dependent on ATP binding by UvrB and probably causes local melting of the DNA helix, facilitating insertion of UvrB beta-hairpin between the DNA strands. Then UvrB probes one DNA strand for the presence of a lesion. If a lesion is found the UvrA subunits dissociate and the UvrB-DNA preincision complex is formed. This complex is subsequently bound by UvrC and the second UvrB is released. If no lesion is found, the DNA wraps around the other UvrB subunit that will check the other stand for damage. The chain is UvrABC system protein B from Coxiella burnetii (strain CbuG_Q212) (Coxiella burnetii (strain Q212)).